A 145-amino-acid polypeptide reads, in one-letter code: Large ribosomal subunit protein uL11 (145 aa).

The protein belongs to the universal ribosomal protein uL11 family. Part of the ribosomal stalk of the 50S ribosomal subunit. Interacts with L10 and the large rRNA to form the base of the stalk. L10 forms an elongated spine to which L12 dimers bind in a sequential fashion forming a multimeric L10(L12)X complex. Post-translationally, one or more lysine residues are methylated.

Its function is as follows. Forms part of the ribosomal stalk which helps the ribosome interact with GTP-bound translation factors. This Francisella philomiragia subsp. philomiragia (strain ATCC 25017 / CCUG 19701 / FSC 153 / O#319-036) protein is Large ribosomal subunit protein uL11.